Here is a 900-residue protein sequence, read N- to C-terminus: MVMNILTKIFGSRNDRTLRRMRKNVDVISRLEPEMEKLSDEELQAKTLEFRVRLEKGEKLENLLPEAFAVVRESSKRVFGMRHFDVQLLGGMVLNERCIAEMRTGEGKTLTATLPAYLNALTGRGVHVVTVNDYLAQRDAENNRPLFEFLGLSVGINLPGMPAPAKREAYAADITYGTNNEYGFDYLRDNMAFSPEERVQRKLYYALVDEVDSILIDEARTPLIISGPAEDSSELYISVNKIIPHLIRQDKEDSDTFHGEGHFSVDEKARQVNLTERGLVLVEELLVKEGIMEEGESLYSPTNIMLMHHVTAALRAHVLFARDVDYIVKDGEVIIVDEHTGRTMQGRRWSDGLHQAVEAKEKVAIQNENQTLASITFQNYFRLYEKLAGMTGTADTEAFEFSSIYKLDTIVVPTNRPMIRKDLPDLVYMTEQEKIDAIIEDIKDRSVKGQPILVGTISIEKSEVVSQALEKAGIKHSVLNAKFHAMEADIVAQAGQSGAVTIATNMAGRGTDIVLGGSWQAEVAHLENPDDEQIAEIKAAWKVRHDAVLAAGGLHIIGTERHESRRIDNQLRGRSGRQGDAGSSRFYLSMEDALMRIFASDRVSNMMRKLGMKPGEAIEHPWVTKAIANAQRKVESRNFDIRKQLLEYDDVASDQRRAIYTQRNELLDVSDISETITSIREDVFKTTIDSYIPPQSLEEMWDTEGLEQRLKNDFDLDMPIKAWLDKEPELHEETLRERIFQQALDVYHRKEEVVGDEVMRNFEKGVMLQTLDSLWKEHLAAMDYLRQGIHLRGYAQKDPKQEYKRESFSMFAAMLESLKYEVISTLSKVQVRMPEEIEALELQRREEAERLAQQQQFSHQEEDSLNTGSPAQADRKIGRNDPCPCGSGKKYKQCHGRLQK.

Residues glutamine 87, 105–109 (GEGKT), and aspartate 512 each bind ATP. The interval 849 to 900 (ERLAQQQQFSHQEEDSLNTGSPAQADRKIGRNDPCPCGSGKKYKQCHGRLQK) is disordered. Residues cysteine 883, cysteine 885, cysteine 894, and histidine 895 each contribute to the Zn(2+) site. Residues 889–900 (KKYKQCHGRLQK) show a composition bias toward basic residues.

This sequence belongs to the SecA family. As to quaternary structure, monomer and homodimer. Part of the essential Sec protein translocation apparatus which comprises SecA, SecYEG and auxiliary proteins SecDF-YajC and YidC. It depends on Zn(2+) as a cofactor.

The protein resides in the cell inner membrane. Its subcellular location is the cytoplasm. The enzyme catalyses ATP + H2O + cellular proteinSide 1 = ADP + phosphate + cellular proteinSide 2.. In terms of biological role, part of the Sec protein translocase complex. Interacts with the SecYEG preprotein conducting channel. Has a central role in coupling the hydrolysis of ATP to the transfer of proteins into and across the cell membrane, serving both as a receptor for the preprotein-SecB complex and as an ATP-driven molecular motor driving the stepwise translocation of polypeptide chains across the membrane. The polypeptide is Protein translocase subunit SecA (Pectobacterium atrosepticum (strain SCRI 1043 / ATCC BAA-672) (Erwinia carotovora subsp. atroseptica)).